The following is a 202-amino-acid chain: Twist-related protein 1 (202 aa).

Over residues 1 to 18 (MMQDVSSSPVSPADDSLS) the composition is skewed to low complexity. The interval 1–105 (MMQDVSSSPV…GGGSPQSYEE (105 aa)) is disordered. Residues 34 to 43 (RGGRKRRSSR) are compositionally biased toward basic residues. Composition is skewed to gly residues over residues 46 to 65 (AGGG…GGDE) and 80 to 99 (GCGG…GGGS). Positions 108 to 159 (TQRVMANVRERQRTQSLNEAFAALRKIIPTLPSDKLSKIQTLKLAARYIDFL) constitute a bHLH domain. Residues 161-191 (QVLQSDELDSKMASCSYVAHERLSYAFSVWR) form a sufficient for transactivation activity region.

In terms of assembly, efficient DNA binding requires dimerization with another bHLH protein. Homodimer or heterodimer with E proteins such as TCF3. ID1 binds preferentially to TCF3 but does not interact efficiently with TWIST1 so ID1 levels control the amount of TCF3 available to dimerize with TWIST1 and thus determine the type of dimer formed. In terms of tissue distribution, subset of mesodermal cells.

It localises to the nucleus. Functionally, acts as a transcriptional regulator. Inhibits myogenesis by sequestrating E proteins, inhibiting trans-activation by MEF2, and inhibiting DNA-binding by MYOD1 through physical interaction. This interaction probably involves the basic domains of both proteins. Also represses expression of pro-inflammatory cytokines such as TNFA and IL1B. Regulates cranial suture patterning and fusion. Activates transcription as a heterodimer with E proteins. Regulates gene expression differentially, depending on dimer composition. Homodimers induce expression of FGFR2 and POSTN while heterodimers repress FGFR2 and POSTN expression and induce THBS1 expression. Heterodimerization is also required for osteoblast differentiation. Represses the activity of the circadian transcriptional activator: NPAS2-BMAL1 heterodimer. The protein is Twist-related protein 1 (TWIST1) of Homo sapiens (Human).